A 71-amino-acid polypeptide reads, in one-letter code: Small ribosomal subunit protein bS21 (71 aa).

The protein belongs to the bacterial ribosomal protein bS21 family.

The sequence is that of Small ribosomal subunit protein bS21 from Nitrosococcus oceani (strain ATCC 19707 / BCRC 17464 / JCM 30415 / NCIMB 11848 / C-107).